The chain runs to 450 residues: Deoxyguanosinetriphosphate triphosphohydrolase-like protein (450 aa).

An HD domain is found at R61 to A274.

Belongs to the dGTPase family. Type 2 subfamily.

The chain is Deoxyguanosinetriphosphate triphosphohydrolase-like protein from Histophilus somni (strain 2336) (Haemophilus somnus).